A 162-amino-acid polypeptide reads, in one-letter code: NADH-quinone oxidoreductase subunit I (162 aa).

4Fe-4S ferredoxin-type domains lie at 52-82 (LRRY…IEAG) and 93-122 (TRYD…EGPN). Residues cysteine 62, cysteine 65, cysteine 68, cysteine 72, cysteine 102, cysteine 105, cysteine 108, and cysteine 112 each coordinate [4Fe-4S] cluster.

This sequence belongs to the complex I 23 kDa subunit family. In terms of assembly, NDH-1 is composed of 14 different subunits. Subunits NuoA, H, J, K, L, M, N constitute the membrane sector of the complex. The cofactor is [4Fe-4S] cluster.

The protein localises to the cell inner membrane. It carries out the reaction a quinone + NADH + 5 H(+)(in) = a quinol + NAD(+) + 4 H(+)(out). NDH-1 shuttles electrons from NADH, via FMN and iron-sulfur (Fe-S) centers, to quinones in the respiratory chain. The immediate electron acceptor for the enzyme in this species is believed to be ubiquinone. Couples the redox reaction to proton translocation (for every two electrons transferred, four hydrogen ions are translocated across the cytoplasmic membrane), and thus conserves the redox energy in a proton gradient. The polypeptide is NADH-quinone oxidoreductase subunit I (Methylorubrum extorquens (strain PA1) (Methylobacterium extorquens)).